We begin with the raw amino-acid sequence, 242 residues long: Segregation and condensation protein A (242 aa).

This sequence belongs to the ScpA family. In terms of assembly, component of a cohesin-like complex composed of ScpA, ScpB and the Smc homodimer, in which ScpA and ScpB bind to the head domain of Smc. The presence of the three proteins is required for the association of the complex with DNA.

It localises to the cytoplasm. Participates in chromosomal partition during cell division. May act via the formation of a condensin-like complex containing Smc and ScpB that pull DNA away from mid-cell into both cell halves. This chain is Segregation and condensation protein A, found in Streptococcus pneumoniae serotype 2 (strain D39 / NCTC 7466).